The sequence spans 133 residues: Ubiquitin-like FUBI-ribosomal protein eS30 fusion protein (133 aa).

The segment at Gly84–Met110 is disordered. Positions Glu97–Met110 are enriched in basic residues. Lys125 is modified (N6-succinyllysine).

It in the N-terminal section; belongs to the ubiquitin family. This sequence in the C-terminal section; belongs to the eukaryotic ribosomal protein eS30 family. In terms of assembly, component of the 40S subunit of the ribosome. FUBI is cleaved from ribosomal protein S30 by the deubiquitinase USP36 before the assembly of ribosomal protein S30 into pre-40S ribosomal particles. FUBI removal from ribosomal protein S30 is a crucial event for the final maturation of pre-40S particles.

It localises to the nucleus. The protein localises to the cytoplasm. In terms of biological role, may have pro-apoptotic activity. Component of the 40S subunit of the ribosome. Contributes to the assembly and function of 40S ribosomal subunits. The polypeptide is Ubiquitin-like FUBI-ribosomal protein eS30 fusion protein (Fau) (Mus musculus (Mouse)).